We begin with the raw amino-acid sequence, 242 residues long: Potassium/proton antiporter CemA (242 aa).

The next 2 membrane-spanning stretches (helical) occupy residues 116 to 136 (IIFCLSTNIISFTILSGYSIL) and 200 to 220 (ISGFVSTFPVFLDTFFKYLIF).

Belongs to the CemA family.

It localises to the plastid. The protein localises to the chloroplast inner membrane. The enzyme catalyses K(+)(in) + H(+)(out) = K(+)(out) + H(+)(in). Contributes to K(+)/H(+) antiport activity by supporting proton efflux to control proton extrusion and homeostasis in chloroplasts in a light-dependent manner to modulate photosynthesis. Prevents excessive induction of non-photochemical quenching (NPQ) under continuous-light conditions. Indirectly promotes efficient inorganic carbon uptake into chloroplasts. In Chloranthus spicatus (Chulantree), this protein is Potassium/proton antiporter CemA.